A 115-amino-acid chain; its full sequence is MKFVLLFGVFLLTLFSYSSSEMLDDFDQADEDELLSLIEKEEARAKECTPRFYDCSHDRHSCCRTELFKDVCTCFYPKRGDNEVCTCQPPKHLMYMEKAADKAKKFGGKIKKWFG.

Positions 1 to 20 are cleaved as a signal peptide; the sequence is MKFVLLFGVFLLTLFSYSSS. The propeptide occupies 21–44; that stretch reads EMLDDFDQADEDELLSLIEKEEAR. Disulfide bonds link C48/C63, C55/C72, C62/C87, and C74/C85.

Belongs to the neurotoxin 19 (CSTX) family. 01 subfamily. In terms of tissue distribution, expressed by the venom gland.

The protein localises to the secreted. This Lycosa singoriensis (Wolf spider) protein is U3-lycotoxin-Ls1s.